Here is a 641-residue protein sequence, read N- to C-terminus: Anthrax toxin receptor-like (641 aa).

The first 27 residues, 1-27 (MMSHSPSMPCSALFLLLLLLLPPTFKG), serve as a signal peptide directing secretion. Topologically, residues 28–363 (GSLRYHGPGW…ASQGIVFKRT (336 aa)) are extracellular. The region spanning 76–247 (DLYLVLDKSG…SALEGVVDPL (172 aa)) is the VWFA domain. A divalent metal cation contacts are provided by S84, S86, and T150. Residues 364 to 384 (WLMFLPVLLVTLLLLCCTWKL) form a helical membrane-spanning segment. At 385–641 (CIKPKKLPPP…FPPISKGPKF (257 aa)) the chain is on the cytoplasmic side. Residues 391–455 (LPPPPPKPEK…ARPPPAPLPA (65 aa)) are disordered. The span at 407-436 (PPPSSPPAPGRGPGPGPSAGPGPGPGPSPG) shows a compositional bias: pro residues.

This sequence belongs to the ATR family.

Its subcellular location is the membrane. In Mus musculus (Mouse), this protein is Anthrax toxin receptor-like (Antxrl).